Here is a 141-residue protein sequence, read N- to C-terminus: UPF0310 protein SGO_1818 (141 aa).

This sequence belongs to the UPF0310 family.

This chain is UPF0310 protein SGO_1818, found in Streptococcus gordonii (strain Challis / ATCC 35105 / BCRC 15272 / CH1 / DL1 / V288).